The chain runs to 150 residues: Large ribosomal subunit protein eL19 (150 aa).

The disordered stretch occupies residues 59-89 (SRYRARIRHEQKKKGRHRGPGSRKGKKTARM). The segment covering 61 to 89 (YRARIRHEQKKKGRHRGPGSRKGKKTARM) has biased composition (basic residues).

This sequence belongs to the eukaryotic ribosomal protein eL19 family. Part of the 50S ribosomal subunit.

In terms of biological role, binds to the 23S rRNA. The protein is Large ribosomal subunit protein eL19 of Pyrococcus horikoshii (strain ATCC 700860 / DSM 12428 / JCM 9974 / NBRC 100139 / OT-3).